The sequence spans 504 residues: Probable alpha-L-arabinofuranosidase C (504 aa).

Asn-152, Asn-181, Asn-269, and Asn-467 each carry an N-linked (GlcNAc...) asparagine glycan.

It belongs to the glycosyl hydrolase 51 family.

It is found in the secreted. The catalysed reaction is Hydrolysis of terminal non-reducing alpha-L-arabinofuranoside residues in alpha-L-arabinosides.. It functions in the pathway glycan metabolism; L-arabinan degradation. Its function is as follows. Alpha-L-arabinofuranosidase involved in the degradation of arabinoxylan, a major component of plant hemicellulose. Acts only on small linear 1,5-alpha-linked L-arabinofuranosyl oligosaccharides. The sequence is that of Probable alpha-L-arabinofuranosidase C (abfC) from Aspergillus terreus (strain NIH 2624 / FGSC A1156).